The primary structure comprises 481 residues: Glycogen synthase (481 aa).

Residue K16 coordinates ADP-alpha-D-glucose.

This sequence belongs to the glycosyltransferase 1 family. Bacterial/plant glycogen synthase subfamily.

It carries out the reaction [(1-&gt;4)-alpha-D-glucosyl](n) + ADP-alpha-D-glucose = [(1-&gt;4)-alpha-D-glucosyl](n+1) + ADP + H(+). The protein operates within glycan biosynthesis; glycogen biosynthesis. Its function is as follows. Synthesizes alpha-1,4-glucan chains using ADP-glucose. The protein is Glycogen synthase of Cellvibrio japonicus (strain Ueda107) (Pseudomonas fluorescens subsp. cellulosa).